The following is a 272-amino-acid chain: HMP-PP phosphatase (272 aa).

The Nucleophile role is filled by aspartate 8. Mg(2+)-binding residues include aspartate 8, aspartate 10, and aspartate 212.

It belongs to the HAD-like hydrolase superfamily. Cof family. Mg(2+) is required as a cofactor.

The enzyme catalyses 4-amino-2-methyl-5-(diphosphooxymethyl)pyrimidine + H2O = 4-amino-2-methyl-5-(phosphooxymethyl)pyrimidine + phosphate + H(+). In terms of biological role, catalyzes the hydrolysis of 4-amino-2-methyl-5-hydroxymethylpyrimidine pyrophosphate (HMP-PP) to 4-amino-2-methyl-5-hydroxymethylpyrimidine phosphate (HMP-P). The chain is HMP-PP phosphatase from Salmonella schwarzengrund (strain CVM19633).